Consider the following 208-residue polypeptide: 3-isopropylmalate dehydratase small subunit 2 (208 aa).

This sequence belongs to the LeuD family. LeuD type 1 subfamily. In terms of assembly, heterodimer of LeuC and LeuD.

It catalyses the reaction (2R,3S)-3-isopropylmalate = (2S)-2-isopropylmalate. It participates in amino-acid biosynthesis; L-leucine biosynthesis; L-leucine from 3-methyl-2-oxobutanoate: step 2/4. Its function is as follows. Catalyzes the isomerization between 2-isopropylmalate and 3-isopropylmalate, via the formation of 2-isopropylmaleate. The polypeptide is 3-isopropylmalate dehydratase small subunit 2 (Salmonella choleraesuis (strain SC-B67)).